We begin with the raw amino-acid sequence, 350 residues long: Variable large protein 4 (350 aa).

A signal peptide spans 1-18; sequence MRRRISAIIMTLFMVLVS. A lipid anchor (N-palmitoyl cysteine) is attached at Cys19. Residue Cys19 is the site of S-diacylglycerol cysteine attachment.

This sequence belongs to the variable large protein (Vlp) family. Delta subfamily.

Its subcellular location is the cell outer membrane. The Vlp and Vsp proteins are antigenically distinct proteins, only one vlp or vsp gene is transcriptionally active at any one time. Switching between these genes is a mechanism of host immune response evasion. The protein is Variable large protein 4 of Borrelia hermsii.